We begin with the raw amino-acid sequence, 381 residues long: 3-isopropylmalate dehydrogenase (381 aa).

4 residues coordinate substrate: Arg104, Arg114, Arg142, and Asp232. Mg(2+) is bound by residues Asp232, Asp256, and Asp260. 290 to 302 serves as a coordination point for NAD(+); that stretch reads GSAPDIAGQDKAN.

It belongs to the isocitrate and isopropylmalate dehydrogenases family. LeuB type 1 subfamily. In terms of assembly, homodimer. The cofactor is Mg(2+). Mn(2+) serves as cofactor.

It is found in the cytoplasm. The catalysed reaction is (2R,3S)-3-isopropylmalate + NAD(+) = 4-methyl-2-oxopentanoate + CO2 + NADH. Its pathway is amino-acid biosynthesis; L-leucine biosynthesis; L-leucine from 3-methyl-2-oxobutanoate: step 3/4. Catalyzes the oxidation of 3-carboxy-2-hydroxy-4-methylpentanoate (3-isopropylmalate) to 3-carboxy-4-methyl-2-oxopentanoate. The product decarboxylates to 4-methyl-2 oxopentanoate. In Synechococcus sp. (strain JA-3-3Ab) (Cyanobacteria bacterium Yellowstone A-Prime), this protein is 3-isopropylmalate dehydrogenase.